Here is a 561-residue protein sequence, read N- to C-terminus: Urocanate hydratase (561 aa).

NAD(+) contacts are provided by residues 52–53 (GG), Gln-130, 176–178 (GMG), Glu-196, Arg-201, 242–243 (NA), 263–267 (QTSAH), 273–274 (YL), and Tyr-322. The active site involves Cys-410. Gly-492 is a binding site for NAD(+).

This sequence belongs to the urocanase family. NAD(+) serves as cofactor.

Its subcellular location is the cytoplasm. The catalysed reaction is 4-imidazolone-5-propanoate = trans-urocanate + H2O. Its pathway is amino-acid degradation; L-histidine degradation into L-glutamate; N-formimidoyl-L-glutamate from L-histidine: step 2/3. Functionally, catalyzes the conversion of urocanate to 4-imidazolone-5-propionate. In Salmonella arizonae (strain ATCC BAA-731 / CDC346-86 / RSK2980), this protein is Urocanate hydratase.